An 865-amino-acid polypeptide reads, in one-letter code: Alanine--tRNA ligase (865 aa).

Residues His-554, His-558, Cys-656, and His-660 each coordinate Zn(2+).

This sequence belongs to the class-II aminoacyl-tRNA synthetase family. It depends on Zn(2+) as a cofactor.

It is found in the cytoplasm. It catalyses the reaction tRNA(Ala) + L-alanine + ATP = L-alanyl-tRNA(Ala) + AMP + diphosphate. Functionally, catalyzes the attachment of alanine to tRNA(Ala) in a two-step reaction: alanine is first activated by ATP to form Ala-AMP and then transferred to the acceptor end of tRNA(Ala). Also edits incorrectly charged Ser-tRNA(Ala) and Gly-tRNA(Ala) via its editing domain. The sequence is that of Alanine--tRNA ligase from Francisella tularensis subsp. novicida (strain U112).